The chain runs to 301 residues: GTPase Era (301 aa).

An Era-type G domain is found at 7–175 (YCGFIAIVGR…AAIVRKHLPE (169 aa)). Positions 15 to 22 (GRPNVGKS) are G1. 15-22 (GRPNVGKS) is a binding site for GTP. Residues 41–45 (QTTRH) are G2. The segment at 62–65 (DTPG) is G3. Residues 62-66 (DTPGL) and 124-127 (NKVD) contribute to the GTP site. Residues 124–127 (NKVD) form a G4 region. The interval 154–156 (ISA) is G5. A KH type-2 domain is found at 206–283 (LGAELPYSVT…HLELWVKVKS (78 aa)).

It belongs to the TRAFAC class TrmE-Era-EngA-EngB-Septin-like GTPase superfamily. Era GTPase family. In terms of assembly, monomer.

It is found in the cytoplasm. The protein localises to the cell inner membrane. Functionally, an essential GTPase that binds both GDP and GTP, with rapid nucleotide exchange. Plays a role in 16S rRNA processing and 30S ribosomal subunit biogenesis and possibly also in cell cycle regulation and energy metabolism. The sequence is that of GTPase Era from Escherichia coli O1:K1 / APEC.